Here is a 392-residue protein sequence, read N- to C-terminus: Putative RNA-binding protein Luc7-like 2 (392 aa).

A Phosphoserine modification is found at S18. A coiled-coil region spans residues 102–177 (EVAKKRLAET…EAEEVYRNSM (76 aa)). The span at 235 to 257 (KQEKRNQERLKRREEREREEREK) shows a compositional bias: basic and acidic residues. Residues 235–392 (KQEKRNQERL…SSEEREAGEI (158 aa)) form a disordered region. A compositionally biased stretch (basic residues) spans 258–321 (LRRSRSHSKN…RSRSHQRSRH (64 aa)). A 5-hydroxylysine; by JMJD6 mark is found at K266 and K269. Composition is skewed to basic and acidic residues over residues 337–364 (KERF…DRDR) and 377–392 (RSED…AGEI).

It belongs to the Luc7 family. As to quaternary structure, interacts with SCNM1.

The protein localises to the nucleus speckle. Its subcellular location is the nucleus. It localises to the nucleoplasm. May bind to RNA via its Arg/Ser-rich domain. This Homo sapiens (Human) protein is Putative RNA-binding protein Luc7-like 2 (LUC7L2).